The sequence spans 1339 residues: DNA polymerase alpha catalytic subunit (1339 aa).

2 disordered regions span residues Met1 to Glu29 and Ala60 to Lys89. Positions Arg8–Gly19 are enriched in basic and acidic residues. 8 residues coordinate Zn(2+): Cys1179, Cys1182, Cys1215, Cys1218, Cys1235, Cys1244, Cys1274, and Cys1289. A CysA-type zinc finger spans residues Cys1179–Cys1218. A CysB motif motif is present at residues Cys1244–Cys1274.

The protein belongs to the DNA polymerase type-B family.

The protein localises to the nucleus. It carries out the reaction DNA(n) + a 2'-deoxyribonucleoside 5'-triphosphate = DNA(n+1) + diphosphate. In terms of biological role, polymerase alpha in a complex with DNA primase is a replicative polymerase. This Trypanosoma brucei brucei protein is DNA polymerase alpha catalytic subunit.